We begin with the raw amino-acid sequence, 101 residues long: Small ribosomal subunit protein uS14 (101 aa).

Residues 1-11 (MAKKSAIETNE) are compositionally biased toward basic and acidic residues. Residues 1 to 20 (MAKKSAIETNERRRKLATGH) are disordered.

It belongs to the universal ribosomal protein uS14 family. Part of the 30S ribosomal subunit. Contacts proteins S3 and S10.

Its function is as follows. Binds 16S rRNA, required for the assembly of 30S particles and may also be responsible for determining the conformation of the 16S rRNA at the A site. This is Small ribosomal subunit protein uS14 from Xanthobacter autotrophicus (strain ATCC BAA-1158 / Py2).